The chain runs to 533 residues: Peptide chain release factor 3 (533 aa).

In terms of domain architecture, tr-type G spans 10-278 (EKRRTFAIIS…TFVEIAPPPQ (269 aa)). GTP is bound by residues 19–26 (SHPDAGKT), 87–91 (DTPGH), and 141–144 (NKMD).

Belongs to the TRAFAC class translation factor GTPase superfamily. Classic translation factor GTPase family. PrfC subfamily.

It localises to the cytoplasm. In terms of biological role, increases the formation of ribosomal termination complexes and stimulates activities of RF-1 and RF-2. It binds guanine nucleotides and has strong preference for UGA stop codons. It may interact directly with the ribosome. The stimulation of RF-1 and RF-2 is significantly reduced by GTP and GDP, but not by GMP. The polypeptide is Peptide chain release factor 3 (Salinibacter ruber (strain DSM 13855 / M31)).